The sequence spans 181 residues: Acetolactate synthase small subunit (181 aa).

In terms of domain architecture, ACT spans 4–78; it reads TLSVLVEDES…NVLKIQDITN (75 aa).

The protein belongs to the acetolactate synthase small subunit family. Dimer of large and small chains.

The protein localises to the plastid. It is found in the chloroplast. The catalysed reaction is 2 pyruvate + H(+) = (2S)-2-acetolactate + CO2. It functions in the pathway amino-acid biosynthesis; L-isoleucine biosynthesis; L-isoleucine from 2-oxobutanoate: step 1/4. It participates in amino-acid biosynthesis; L-valine biosynthesis; L-valine from pyruvate: step 1/4. This Galdieria sulphuraria (Red alga) protein is Acetolactate synthase small subunit (ilvH).